Here is a 410-residue protein sequence, read N- to C-terminus: Lissencephaly-1 homolog (410 aa).

The 33-residue stretch at 7 to 39 (QQEELQLAVHAYLVEAGHAEAAAAMAKSANLGD) folds into the LisH domain. Residues 55-80 (TTITRLQKRNMELQAEVEELRSSARA) adopt a coiled-coil conformation. WD repeat units follow at residues 104–143 (GHRL…FERS), 146–185 (GHTN…CTKT), 188–227 (GHDH…CLQT), 230–269 (GHSD…CKHV), 294–333 (MIFG…HLAR), 336–375 (GHDN…VSKT), and 378–410 (AHNH…WECN).

It belongs to the WD repeat LIS1/nudF family.

The protein resides in the cytoplasm. Its subcellular location is the cytoskeleton. The protein localises to the microtubule organizing center. It localises to the centrosome. In terms of biological role, positively regulates the activity of the minus-end directed microtubule motor protein dynein. May enhance dynein-mediated microtubule sliding by targeting dynein to the microtubule plus end. Required for several dynein- and microtubule-dependent processes. The sequence is that of Lissencephaly-1 homolog from Monosiga brevicollis (Choanoflagellate).